Here is a 201-residue protein sequence, read N- to C-terminus: uncharacterized protein (201 aa).

Acidic residues predominate over residues 64–78 (DNEIKEEEESEEEEK). Disordered regions lie at residues 64–114 (DNEI…FKNA) and 182–201 (ILPGGCTGNTETVDQGLSKQ). Residues 96-106 (RNKHGRNRNPR) show a composition bias toward basic residues. Positions 189–201 (GNTETVDQGLSKQ) are enriched in polar residues.

This is an uncharacterized protein from Ostreid herpesvirus 1 (isolate France) (OsHV-1).